Here is a 792-residue protein sequence, read N- to C-terminus: Lon protease (792 aa).

A Lon N-terminal domain is found at 16–208 (LPILPLRETV…KVTYYLTREL (193 aa)). Residue 360–367 (GPPGVGKT) coordinates ATP. One can recognise a Lon proteolytic domain in the interval 597–778 (KDEVGVATGL…DEVLNLALLE (182 aa)). Active-site residues include serine 684 and lysine 727.

The protein belongs to the peptidase S16 family. Homohexamer. Organized in a ring with a central cavity.

The protein localises to the cytoplasm. The enzyme catalyses Hydrolysis of proteins in presence of ATP.. In terms of biological role, ATP-dependent serine protease that mediates the selective degradation of mutant and abnormal proteins as well as certain short-lived regulatory proteins. Required for cellular homeostasis and for survival from DNA damage and developmental changes induced by stress. Degrades polypeptides processively to yield small peptide fragments that are 5 to 10 amino acids long. Binds to DNA in a double-stranded, site-specific manner. The chain is Lon protease from Dictyoglomus thermophilum (strain ATCC 35947 / DSM 3960 / H-6-12).